Reading from the N-terminus, the 439-residue chain is Ribosomal protein uS12 methylthiotransferase RimO (439 aa).

Residues lysine 3–proline 118 form the MTTase N-terminal domain. [4Fe-4S] cluster contacts are provided by cysteine 12, cysteine 48, cysteine 81, cysteine 157, cysteine 161, and cysteine 164. In terms of domain architecture, Radical SAM core spans asparagine 143 to glutamate 370. Residues glutamate 373 to serine 438 enclose the TRAM domain.

It belongs to the methylthiotransferase family. RimO subfamily. [4Fe-4S] cluster serves as cofactor.

Its subcellular location is the cytoplasm. The catalysed reaction is L-aspartate(89)-[ribosomal protein uS12]-hydrogen + (sulfur carrier)-SH + AH2 + 2 S-adenosyl-L-methionine = 3-methylsulfanyl-L-aspartate(89)-[ribosomal protein uS12]-hydrogen + (sulfur carrier)-H + 5'-deoxyadenosine + L-methionine + A + S-adenosyl-L-homocysteine + 2 H(+). Its function is as follows. Catalyzes the methylthiolation of an aspartic acid residue of ribosomal protein uS12. The sequence is that of Ribosomal protein uS12 methylthiotransferase RimO from Leptospira borgpetersenii serovar Hardjo-bovis (strain JB197).